The chain runs to 252 residues: MKRSMRSHLAKQTRSVIFTGYPVIGSQDRIMSSGACLDSHQNGLITSCPWDPRIKGEFFYQTALSVPLTHVKDFINDIKALVKIEPKSLCGLELNYGVLVRYVTSSPAYLRKEEKALDFDLTYYRSKDDPWTPRLYEDYMEEIEQMAILKYNALPHWGKNRNLAFDGAIKKYKNANTFLKVKERLDPWGLFSTEWTDQILGLKGNVTIVKQGCAPEGLCICSDDSHCAPNKGYMCRPGKVYKEARVCTLVTA.

The N-terminal 102 residues, 1 to 102 (MKRSMRSHLA…ELNYGVLVRY (102 aa)), are a transit peptide targeting the mitochondrion.

This sequence belongs to the oxygen-dependent FAD-linked oxidoreductase family.

The protein localises to the mitochondrion. The catalysed reaction is L-gulono-1,4-lactone + O2 = L-ascorbate + H2O2 + H(+). It functions in the pathway cofactor biosynthesis; L-ascorbate biosynthesis. Functionally, may be involved in the biosynthesis of ascorbic acid. This Arabidopsis thaliana (Mouse-ear cress) protein is Probable truncated L-gulonolactone oxidase 7, mitochondrial.